The primary structure comprises 63 residues: Cytochrome c oxidase subunit 7C, mitochondrial (63 aa).

A mitochondrion-targeting transit peptide spans methionine 1–arginine 16. At serine 17–asparagine 33 the chain is on the mitochondrial matrix side. Residue lysine 25 is modified to N6-acetyllysine; alternate. Residue lysine 25 is modified to N6-succinyllysine; alternate. The helical transmembrane segment at lysine 34 to leucine 60 threads the bilayer. Topologically, residues leucine 61 to lysine 63 are mitochondrial intermembrane.

This sequence belongs to the cytochrome c oxidase VIIc family. As to quaternary structure, component of the cytochrome c oxidase (complex IV, CIV), a multisubunit enzyme composed of 14 subunits. The complex is composed of a catalytic core of 3 subunits MT-CO1, MT-CO2 and MT-CO3, encoded in the mitochondrial DNA, and 11 supernumerary subunits COX4I, COX5A, COX5B, COX6A, COX6B, COX6C, COX7A, COX7B, COX7C, COX8 and NDUFA4, which are encoded in the nuclear genome. The complex exists as a monomer or a dimer and forms supercomplexes (SCs) in the inner mitochondrial membrane with NADH-ubiquinone oxidoreductase (complex I, CI) and ubiquinol-cytochrome c oxidoreductase (cytochrome b-c1 complex, complex III, CIII), resulting in different assemblies (supercomplex SCI(1)III(2)IV(1) and megacomplex MCI(2)III(2)IV(2)). Interacts with RAB5IF.

It is found in the mitochondrion inner membrane. It participates in energy metabolism; oxidative phosphorylation. Functionally, component of the cytochrome c oxidase, the last enzyme in the mitochondrial electron transport chain which drives oxidative phosphorylation. The respiratory chain contains 3 multisubunit complexes succinate dehydrogenase (complex II, CII), ubiquinol-cytochrome c oxidoreductase (cytochrome b-c1 complex, complex III, CIII) and cytochrome c oxidase (complex IV, CIV), that cooperate to transfer electrons derived from NADH and succinate to molecular oxygen, creating an electrochemical gradient over the inner membrane that drives transmembrane transport and the ATP synthase. Cytochrome c oxidase is the component of the respiratory chain that catalyzes the reduction of oxygen to water. Electrons originating from reduced cytochrome c in the intermembrane space (IMS) are transferred via the dinuclear copper A center (CU(A)) of subunit 2 and heme A of subunit 1 to the active site in subunit 1, a binuclear center (BNC) formed by heme A3 and copper B (CU(B)). The BNC reduces molecular oxygen to 2 water molecules using 4 electrons from cytochrome c in the IMS and 4 protons from the mitochondrial matrix. The protein is Cytochrome c oxidase subunit 7C, mitochondrial (COX7C) of Carlito syrichta (Philippine tarsier).